Consider the following 307-residue polypeptide: GTPase Era (307 aa).

The region spanning 13-180 (RCGFVALIGA…RRALAEMVPP (168 aa)) is the Era-type G domain. Residues 21–28 (GAPNVGKS) form a G1 region. GTP is bound at residue 21 to 28 (GAPNVGKS). Positions 47-51 (QTTRA) are G2. Residues 68–71 (DTPG) form a G3 region. GTP contacts are provided by residues 68–72 (DTPGI) and 130–133 (NKVD). Residues 130–133 (NKVD) are G4. A G5 region spans residues 159–161 (ISA). The KH type-2 domain maps to 211–288 (LHQELPYQST…HLFLFVKVRE (78 aa)).

Belongs to the TRAFAC class TrmE-Era-EngA-EngB-Septin-like GTPase superfamily. Era GTPase family. In terms of assembly, monomer.

Its subcellular location is the cytoplasm. It localises to the cell inner membrane. An essential GTPase that binds both GDP and GTP, with rapid nucleotide exchange. Plays a role in 16S rRNA processing and 30S ribosomal subunit biogenesis and possibly also in cell cycle regulation and energy metabolism. This is GTPase Era from Bradyrhizobium sp. (strain ORS 278).